Here is a 297-residue protein sequence, read N- to C-terminus: 2,3,4,5-tetrahydropyridine-2,6-dicarboxylate N-succinyltransferase (297 aa).

Residues Asp148 and Glu165 each contribute to the Mg(2+) site. The Acyl-anhydride intermediate role is filled by Glu181. Succinyl-CoA is bound by residues Arg183, Gly198, Ser201, Ala224, 239 to 240 (EA), Gly247, Lys258, and 271 to 274 (RRDS).

This sequence belongs to the type 2 tetrahydrodipicolinate N-succinyltransferase family. As to quaternary structure, homotrimer.

The protein resides in the cytoplasm. The catalysed reaction is (S)-2,3,4,5-tetrahydrodipicolinate + succinyl-CoA + H2O = (S)-2-succinylamino-6-oxoheptanedioate + CoA. The protein operates within amino-acid biosynthesis; L-lysine biosynthesis via DAP pathway; LL-2,6-diaminopimelate from (S)-tetrahydrodipicolinate (succinylase route): step 1/3. In terms of biological role, catalyzes the conversion of the cyclic tetrahydrodipicolinate (THDP) into the acyclic N-succinyl-L-2-amino-6-oxopimelate using succinyl-CoA. The chain is 2,3,4,5-tetrahydropyridine-2,6-dicarboxylate N-succinyltransferase from Corynebacterium glutamicum (strain ATCC 13032 / DSM 20300 / JCM 1318 / BCRC 11384 / CCUG 27702 / LMG 3730 / NBRC 12168 / NCIMB 10025 / NRRL B-2784 / 534).